Reading from the N-terminus, the 490-residue chain is Flap endonuclease 1 (490 aa).

The N-domain stretch occupies residues 1–106; that stretch reads MGIKGLTKFL…DELTKRDERR (106 aa). Aspartate 34 provides a ligand contact to Mg(2+). Residues arginine 47 and arginine 72 each contribute to the DNA site. Aspartate 88, glutamate 160, glutamate 162, aspartate 181, and aspartate 183 together coordinate Mg(2+). Residues 124–266 are I-domain; that stretch reads LIKKQSVRTI…STAYKLLKKY (143 aa). Glutamate 160 serves as a coordination point for DNA. The DNA site is built by glycine 244 and aspartate 246. Aspartate 246 is a Mg(2+) binding site. The segment at 351–359 is interaction with PCNA; that stretch reads SQTCLDGFF. Disordered stretches follow at residues 364 to 396 and 421 to 490; these read NERK…SLSC and SSQA…SDED. Residues 430–442 show a composition bias toward polar residues; that stretch reads ENSSEAPNQSSEI. Basic and acidic residues predominate over residues 443–454; the sequence is KVNKIEENKDSE. Over residues 455–469 the composition is skewed to polar residues; sequence SSTVENTPSLQTKSP.

It belongs to the XPG/RAD2 endonuclease family. FEN1 subfamily. Interacts with PCNA. Three molecules of FEN1 bind to one PCNA trimer with each molecule binding to one PCNA monomer. PCNA stimulates the nuclease activity without altering cleavage specificity. Requires Mg(2+) as cofactor. In terms of processing, phosphorylated. Phosphorylation upon DNA damage induces relocalization to the nuclear plasma.

It localises to the nucleus. The protein localises to the nucleolus. It is found in the nucleoplasm. The protein resides in the mitochondrion. Functionally, structure-specific nuclease with 5'-flap endonuclease and 5'-3' exonuclease activities involved in DNA replication and repair. During DNA replication, cleaves the 5'-overhanging flap structure that is generated by displacement synthesis when DNA polymerase encounters the 5'-end of a downstream Okazaki fragment. It enters the flap from the 5'-end and then tracks to cleave the flap base, leaving a nick for ligation. Also involved in the long patch base excision repair (LP-BER) pathway, by cleaving within the apurinic/apyrimidinic (AP) site-terminated flap. Acts as a genome stabilization factor that prevents flaps from equilibrating into structures that lead to duplications and deletions. Also possesses 5'-3' exonuclease activity on nicked or gapped double-stranded DNA, and exhibits RNase H activity. Also involved in replication and repair of rDNA and in repairing mitochondrial DNA. The sequence is that of Flap endonuclease 1 from Cryptosporidium parvum (strain Iowa II).